Reading from the N-terminus, the 455-residue chain is Retinoic acid receptor beta (455 aa).

Residues 1–87 (MTTSSRTCPV…PLPPPRVYKP (87 aa)) are modulating. A disordered region spans residues 45-78 (QSHPPTSGCSTPSPASVETQSTSSEELVPSPPSP). Polar residues predominate over residues 47 to 66 (HPPTSGCSTPSPASVETQST). 2 NR C4-type zinc fingers span residues 88 to 108 (CFVC…CEGC) and 124 to 148 (CHRD…LQKC). Residues 88–153 (CFVCQDKSSG…RLQKCFEVGM (66 aa)) constitute a DNA-binding region (nuclear receptor). The tract at residues 154–182 (SKESVRNDRNKKKKEPTKQESTENYEMTA) is hinge. In terms of domain architecture, NR LBD spans 183–417 (ELDDLTEKIR…PLIQEMLENS (235 aa)). The disordered stretch occupies residues 416–455 (NSEGHEPLTPTSNGNTAEHSPSISPSSVDNSSVSQSPMVQ). The span at 424 to 434 (TPTSNGNTAEH) shows a compositional bias: polar residues. Positions 435-455 (SPSISPSSVDNSSVSQSPMVQ) are enriched in low complexity.

It belongs to the nuclear hormone receptor family. NR1 subfamily. As to quaternary structure, heterodimer; with a RXR molecule. Binds DNA preferentially as a RAR/RXR heterodimer. Both isoforms expressed in heart, lung, kidney, liver, brain, lung and testis. Isoform Beta-1 is highly expressed in testes and brain. Levels increase during testes maturation. Isoform beta-2 is predominant in heart, kidney and lung.

Its subcellular location is the nucleus. Functionally, receptor for retinoic acid. Retinoic acid receptors bind as heterodimers to their target response elements in response to their ligands, all-trans or 9-cis retinoic acid, and regulate gene expression in various biological processes. The RAR/RXR heterodimers bind to the retinoic acid response elements (RARE) composed of tandem 5'-AGGTCA-3' sites known as DR1-DR5. May be required for Sertoli cell differentiation and spermatogenesis. The chain is Retinoic acid receptor beta (RARB) from Coturnix japonica (Japanese quail).